Consider the following 314-residue polypeptide: Lipoyl synthase (314 aa).

[4Fe-4S] cluster is bound by residues Cys-67, Cys-72, Cys-78, Cys-93, Cys-97, Cys-100, and Ser-306. One can recognise a Radical SAM core domain in the interval 79–295 (FNRGTATFMI…KNYALSIGFK (217 aa)).

Belongs to the radical SAM superfamily. Lipoyl synthase family. It depends on [4Fe-4S] cluster as a cofactor.

The protein resides in the cytoplasm. The catalysed reaction is [[Fe-S] cluster scaffold protein carrying a second [4Fe-4S](2+) cluster] + N(6)-octanoyl-L-lysyl-[protein] + 2 oxidized [2Fe-2S]-[ferredoxin] + 2 S-adenosyl-L-methionine + 4 H(+) = [[Fe-S] cluster scaffold protein] + N(6)-[(R)-dihydrolipoyl]-L-lysyl-[protein] + 4 Fe(3+) + 2 hydrogen sulfide + 2 5'-deoxyadenosine + 2 L-methionine + 2 reduced [2Fe-2S]-[ferredoxin]. The protein operates within protein modification; protein lipoylation via endogenous pathway; protein N(6)-(lipoyl)lysine from octanoyl-[acyl-carrier-protein]: step 2/2. Functionally, catalyzes the radical-mediated insertion of two sulfur atoms into the C-6 and C-8 positions of the octanoyl moiety bound to the lipoyl domains of lipoate-dependent enzymes, thereby converting the octanoylated domains into lipoylated derivatives. The sequence is that of Lipoyl synthase from Buchnera aphidicola subsp. Baizongia pistaciae (strain Bp).